A 456-amino-acid polypeptide reads, in one-letter code: 5-hydroxytryptamine receptor 3E (456 aa).

Positions 1 to 25 (MEGSWFHRKRFSFYLLLGFLLQGRG) are cleaved as a signal peptide. Residues 26–248 (VTFTINCSGF…FYVAIRRRPS (223 aa)) lie on the Extracellular side of the membrane. An intrachain disulfide couples Cys-162 to Cys-176. A glycan (N-linked (GlcNAc...) asparagine) is linked at Asn-175. Residues 249–269 (LYVINLLVPSGFLVAIDALSF) form a helical membrane-spanning segment. Over 270–282 (YLPVKSGNRVPFK) the chain is Cytoplasmic. The helical transmembrane segment at 283–303 (ITLLLGYNVFLLMMSDLLPTS) threads the bilayer. Topologically, residues 304–307 (GTPL) are extracellular. Residues 308-328 (IGVYFALCLSLMVGSLLETIF) form a helical membrane-spanning segment. Over 329-433 (ITHLLHVATT…WLQFSHAMDA (105 aa)) the chain is Cytoplasmic. Residues 401–432 (TGGSEWTRAQREHEAQKQHSVELWLQFSHAMD) form an HA-stretch; determines single-channel conductance in 5-HT3 receptors region. Residues 434-454 (MLFRLYLLFMASSIITVICLW) form a helical membrane-spanning segment. Over 455–456 (NT) the chain is Extracellular.

This sequence belongs to the ligand-gated ion channel (TC 1.A.9) family. 5-hydroxytryptamine receptor (TC 1.A.9.2) subfamily. HTR3E sub-subfamily. Forms homopentameric as well as heteropentameric serotonin-activated cation-selective channel complexes with HTR3A. The homomeric complex is not functional. Heteropentameric complexes display properties which resemble that of neuronal serotonin-activated channels in vivo. In terms of tissue distribution, expressed in adult colon and intestine.

The protein localises to the postsynaptic cell membrane. Its subcellular location is the cell membrane. The enzyme catalyses Na(+)(in) = Na(+)(out). The catalysed reaction is K(+)(in) = K(+)(out). It catalyses the reaction Ca(2+)(in) = Ca(2+)(out). Its function is as follows. Forms serotonin (5-hydroxytryptamine/5-HT3)-activated cation-selective channel complexes, which when activated cause fast, depolarizing responses in neurons. This is 5-hydroxytryptamine receptor 3E from Homo sapiens (Human).